A 283-amino-acid chain; its full sequence is Thymidylate synthase (283 aa).

R22 contacts dUMP. C160 functions as the Nucleophile in the catalytic mechanism. Residues 180 to 183 (RSCD), N191, and 221 to 223 (HIY) each bind dUMP. D183 contacts (6R)-5,10-methylene-5,6,7,8-tetrahydrofolate. (6R)-5,10-methylene-5,6,7,8-tetrahydrofolate is bound at residue S282.

Belongs to the thymidylate synthase family. Bacterial-type ThyA subfamily. Homodimer.

The protein localises to the cytoplasm. It carries out the reaction dUMP + (6R)-5,10-methylene-5,6,7,8-tetrahydrofolate = 7,8-dihydrofolate + dTMP. It functions in the pathway pyrimidine metabolism; dTTP biosynthesis. Functionally, catalyzes the reductive methylation of 2'-deoxyuridine-5'-monophosphate (dUMP) to 2'-deoxythymidine-5'-monophosphate (dTMP) while utilizing 5,10-methylenetetrahydrofolate (mTHF) as the methyl donor and reductant in the reaction, yielding dihydrofolate (DHF) as a by-product. This enzymatic reaction provides an intracellular de novo source of dTMP, an essential precursor for DNA biosynthesis. The sequence is that of Thymidylate synthase from Actinobacillus succinogenes (strain ATCC 55618 / DSM 22257 / CCUG 43843 / 130Z).